A 118-amino-acid polypeptide reads, in one-letter code: Ribonuclease P protein component (118 aa).

It belongs to the RnpA family. As to quaternary structure, consists of a catalytic RNA component (M1 or rnpB) and a protein subunit.

The catalysed reaction is Endonucleolytic cleavage of RNA, removing 5'-extranucleotides from tRNA precursor.. Its function is as follows. RNaseP catalyzes the removal of the 5'-leader sequence from pre-tRNA to produce the mature 5'-terminus. It can also cleave other RNA substrates such as 4.5S RNA. The protein component plays an auxiliary but essential role in vivo by binding to the 5'-leader sequence and broadening the substrate specificity of the ribozyme. In Rickettsia rickettsii (strain Iowa), this protein is Ribonuclease P protein component.